The primary structure comprises 132 residues: Myelin P2 protein (132 aa).

At serine 2 the chain carries N-acetylserine. Arginine 107 contacts (9Z)-octadecenoate. Hexadecanoate is bound at residue arginine 107. Residues cysteine 118 and cysteine 125 are joined by a disulfide bond. Residue 127-129 coordinates (9Z)-octadecenoate; sequence RIY. Residue 127–129 participates in hexadecanoate binding; the sequence is RIY.

This sequence belongs to the calycin superfamily. Fatty-acid binding protein (FABP) family. Monomer. Detected in spinal cord (at protein level).

The protein resides in the cytoplasm. May play a role in lipid transport protein in Schwann cells. May bind cholesterol. The polypeptide is Myelin P2 protein (PMP2) (Equus caballus (Horse)).